The following is a 150-amino-acid chain: Ventricular natriuretic peptide (150 aa).

A signal peptide spans 1–21 (MAKSGIYLGCFILILIQNMVA). The interval 52-75 (EEPEVYPESEDMKMDAEEEDAGIS) is disordered. Cys-120 and Cys-136 are oxidised to a cystine.

Belongs to the natriuretic peptide family. In terms of tissue distribution, heart ventricle, and to a lower extent in heart atrium.

It localises to the secreted. Its function is as follows. Exhibits natriuretic and vasodepressor activity. The protein is Ventricular natriuretic peptide (vnp) of Anguilla japonica (Japanese eel).